A 418-amino-acid polypeptide reads, in one-letter code: Sialidase-3 (418 aa).

An FRIP motif motif is present at residues Tyr-24–Pro-27. Residues Arg-25 and Arg-45 each contribute to the substrate site. The active-site Proton acceptor is Asp-50. One copy of the BNR 1 repeat lies at Leu-129 to Glu-140. 2 residues coordinate substrate: Tyr-179 and Tyr-181. A BNR 2 repeat occupies Ser-203–Lys-214. Residues Glu-223 and Arg-243 each contribute to the substrate site. A BNR 3 repeat occupies Ser-254–Thr-265. At Ser-312 the chain carries Phosphoserine. Arg-339 contacts substrate. The active-site Nucleophile is the Tyr-369. Residue Glu-386 is part of the active site.

It belongs to the glycosyl hydrolase 33 family. In terms of assembly, interacts with CAV1; this interaction enhances NEU3 sialidase activity within caveola. Interacts with EGFR; this interaction mediates desialylation of EGFR and enhances downstream signaling. Palmitoylated; may regulate intracellular trafficking and anchorage to plasma membrane and endomembranes. Expressed in heart, brain and cerebral cortex.

The protein localises to the cell membrane. It is found in the membrane. Its subcellular location is the caveola. It localises to the early endosome membrane. The protein resides in the recycling endosome membrane. The protein localises to the lysosome membrane. It carries out the reaction Hydrolysis of alpha-(2-&gt;3)-, alpha-(2-&gt;6)-, alpha-(2-&gt;8)- glycosidic linkages of terminal sialic acid residues in oligosaccharides, glycoproteins, glycolipids, colominic acid and synthetic substrates.. It catalyses the reaction a ganglioside GD1a + H2O = a ganglioside GM1 + N-acetylneuraminate. The enzyme catalyses a ganglioside GD1a (d18:1(4E)) + H2O = a ganglioside GM1 (d18:1(4E)) + N-acetylneuraminate. The catalysed reaction is a ganglioside GD1b + H2O = a ganglioside GM1 + N-acetylneuraminate. It carries out the reaction a ganglioside GD1b (d18:1(4E)) + H2O = a ganglioside GM1 (d18:1(4E)) + N-acetylneuraminate. It catalyses the reaction a ganglioside GD3 + H2O = a ganglioside GM3 + N-acetylneuraminate. The enzyme catalyses a ganglioside GD3 (d18:1(4E)) + H2O = a ganglioside GM3 (d18:1(4E)) + N-acetylneuraminate. The catalysed reaction is a ganglioside GM3 + H2O = a beta-D-galactosyl-(1-&gt;4)-beta-D-glucosyl-(1&lt;-&gt;1)-ceramide + N-acetylneuraminate. It carries out the reaction a ganglioside GM1 + H2O = a ganglioside GA1 + N-acetylneuraminate. It catalyses the reaction a ganglioside GM1 (d18:1(4E)) + H2O = a ganglioside GA1 (d18:1(4E)) + N-acetylneuraminate. The enzyme catalyses a ganglioside GM2 (d18:1(4E)) + H2O = a ganglioside GA2 (d18:1(4E)) + N-acetylneuraminate. The catalysed reaction is a ganglioside GM3 (d18:1(4E)) + H2O = a beta-D-Gal-(1-&gt;4)-beta-D-Glc-(1&lt;-&gt;1)-Cer(d18:1(4E)) + N-acetylneuraminate. It carries out the reaction a ganglioside GT1b + H2O = a ganglioside GD1b + N-acetylneuraminate. Functionally, exo-alpha-sialidase that catalyzes the hydrolytic cleavage of the terminal sialic acid (N-acetylneuraminic acid, Neu5Ac) of a glycan moiety in the catabolism of glycolipids, glycoproteins and oligosacharides. Displays high catalytic efficiency for gangliosides including alpha-(2-&gt;3)-sialylated GD1a and GM3 and alpha-(2-&gt;8)-sialylated GD3. Plays a role in the regulation of transmembrane signaling through the modulation of ganglioside content of the lipid bilayer and by direct interaction with signaling receptors, such as EGFR. Desialylates EGFR and activates downstream signaling in proliferating cells. Contributes to clathrin-mediated endocytosis by regulating sorting of endocytosed receptors to early and recycling endosomes. This is Sialidase-3 (Neu3) from Mus musculus (Mouse).